A 1171-amino-acid chain; its full sequence is DNA polymerase catalytic subunit (1171 aa).

3 disordered regions span residues G647–T687, P704–P735, and V1149–R1171. A compositionally biased stretch (pro residues) spans P649 to T662. 2 stretches are compositionally biased toward low complexity: residues P663–G674 and V709–T725. The segment covering V1149–R1158 has biased composition (basic and acidic residues).

This sequence belongs to the DNA polymerase type-B family.

The protein localises to the host nucleus. It catalyses the reaction DNA(n) + a 2'-deoxyribonucleoside 5'-triphosphate = DNA(n+1) + diphosphate. The sequence is that of DNA polymerase catalytic subunit (DPOL) from Tupaia belangeri (Common tree shrew).